The following is a 598-amino-acid chain: tRNA(Met) cytidine acetyltransferase TmcA (598 aa).

ATP is bound by residues glutamine 141, 163–172 (GRGKSTLAGK), and arginine 288. In terms of domain architecture, N-acetyltransferase spans 332-490 (TDLRRLFDAD…HSAMMLYPLS (159 aa)). Acetyl-CoA is bound by residues 411-413 (IAV), 418-424 (QNQGIGS), and arginine 462.

Belongs to the RNA cytidine acetyltransferase family. TmcA subfamily.

The protein resides in the cytoplasm. It carries out the reaction cytidine(34) in elongator tRNA(Met) + acetyl-CoA + ATP + H2O = N(4)-acetylcytidine(34) in elongator tRNA(Met) + ADP + phosphate + CoA + H(+). In terms of biological role, catalyzes the formation of N(4)-acetylcytidine (ac(4)C) at the wobble position of tRNA(Met), by using acetyl-CoA as an acetyl donor and ATP (or GTP). The polypeptide is tRNA(Met) cytidine acetyltransferase TmcA (Haemophilus ducreyi (strain 35000HP / ATCC 700724)).